A 583-amino-acid polypeptide reads, in one-letter code: Bifunctional dihydrofolate reductase-thymidylate synthase (583 aa).

One can recognise a DHFR domain in the interval 9–229 (DIYAICACCK…TTLDFVIYSK (221 aa)). 36–42 (GLGNEGG) provides a ligand contact to NADP(+). Aspartate 51 provides a ligand contact to substrate. Residues 104 to 106 (KAS) and 125 to 128 (LSRT) contribute to the NADP(+) site. Substrate-binding residues include isoleucine 165, tyrosine 171, and threonine 186. 166–173 (GGASVYKE) provides a ligand contact to NADP(+). Residues 298–583 (HPEYQYLNII…HDKISMDMAA (286 aa)) are thymidylate synthase. Arginine 320 is a binding site for dUMP. Cysteine 465 is a catalytic residue. DUMP contacts are provided by residues histidine 466, 484 to 488 (QRSCD), asparagine 496, and 526 to 528 (HVY).

The protein in the N-terminal section; belongs to the dihydrofolate reductase family. It in the C-terminal section; belongs to the thymidylate synthase family. As to quaternary structure, homodimer.

It carries out the reaction (6S)-5,6,7,8-tetrahydrofolate + NADP(+) = 7,8-dihydrofolate + NADPH + H(+). The enzyme catalyses dUMP + (6R)-5,10-methylene-5,6,7,8-tetrahydrofolate = 7,8-dihydrofolate + dTMP. It functions in the pathway cofactor biosynthesis; tetrahydrofolate biosynthesis; 5,6,7,8-tetrahydrofolate from 7,8-dihydrofolate: step 1/1. Bifunctional enzyme. Involved in de novo dTMP biosynthesis. Key enzyme in folate metabolism. Catalyzes an essential reaction for de novo glycine and purine synthesis, DNA precursor synthesis, and for the conversion of dUMP to dTMP. The polypeptide is Bifunctional dihydrofolate reductase-thymidylate synthase (Plasmodium chabaudi).